The chain runs to 118 residues: Large ribosomal subunit protein bL20 (118 aa).

This sequence belongs to the bacterial ribosomal protein bL20 family.

Binds directly to 23S ribosomal RNA and is necessary for the in vitro assembly process of the 50S ribosomal subunit. It is not involved in the protein synthesizing functions of that subunit. This Tolumonas auensis (strain DSM 9187 / NBRC 110442 / TA 4) protein is Large ribosomal subunit protein bL20.